The primary structure comprises 198 residues: Recombination protein RecR (198 aa).

A C4-type zinc finger spans residues 57–72 (CSVCGHITEEDPCYIC). The 96-residue stretch at 80–175 (SVICVVEDDK…KVTRLAQGLS (96 aa)) folds into the Toprim domain.

This sequence belongs to the RecR family.

Functionally, may play a role in DNA repair. It seems to be involved in an RecBC-independent recombinational process of DNA repair. It may act with RecF and RecO. This is Recombination protein RecR from Staphylococcus carnosus (strain TM300).